Reading from the N-terminus, the 264-residue chain is Thiazole synthase (264 aa).

Lys-104 serves as the catalytic Schiff-base intermediate with DXP. 1-deoxy-D-xylulose 5-phosphate-binding positions include Gly-165, 191–192 (AG), and 213–214 (NT).

The protein belongs to the ThiG family. In terms of assembly, homotetramer. Forms heterodimers with either ThiH or ThiS.

The protein resides in the cytoplasm. It carries out the reaction [ThiS sulfur-carrier protein]-C-terminal-Gly-aminoethanethioate + 2-iminoacetate + 1-deoxy-D-xylulose 5-phosphate = [ThiS sulfur-carrier protein]-C-terminal Gly-Gly + 2-[(2R,5Z)-2-carboxy-4-methylthiazol-5(2H)-ylidene]ethyl phosphate + 2 H2O + H(+). The protein operates within cofactor biosynthesis; thiamine diphosphate biosynthesis. Catalyzes the rearrangement of 1-deoxy-D-xylulose 5-phosphate (DXP) to produce the thiazole phosphate moiety of thiamine. Sulfur is provided by the thiocarboxylate moiety of the carrier protein ThiS. In vitro, sulfur can be provided by H(2)S. The polypeptide is Thiazole synthase (Oleidesulfovibrio alaskensis (strain ATCC BAA-1058 / DSM 17464 / G20) (Desulfovibrio alaskensis)).